A 444-amino-acid polypeptide reads, in one-letter code: MNNDNTDYVSNESGTLSRLFKLPQHGTTVRTELIAGMTTFLTMVYIVFVNPQILGAAQMDPKVVFVTTCLIAGIGSIAMGIFANLPVALAPAMGLNAFFAFVVVGAMGISWQTGMGAIFWGAVGLFLLTLFRIRYWMISNIPLSLRIGITSGIGLFIALMGLKNTGVIVANKDTLVMIGDLSSHGVLLGILGFFIITVLSSRHFHAAVLVSIVVTSCCGLFFGDVHFSGVYSIPPDISGVIGEVDLSGALTLELAGIIFSFMLINLFDSSGTLIGVTDKAGLIDGNGKFPNMNKALYVDSVSSVAGAFIGTSSVTAYIESTSGVAVGGRTGLTAVVVGVMFLLVMFFSPLVAIVPPYATAGALIFVGVLMTSSLARVNWDDFTESVPAFITTVMMPFTFSITEGIALGFMSYCIMKVCTGRWRDLNLCVVVVAALFALKIILVD.

Residues 1–29 (MNNDNTDYVSNESGTLSRLFKLPQHGTTV) are Cytoplasmic-facing. Residues 30–53 (RTELIAGMTTFLTMVYIVFVNPQI) form a helical membrane-spanning segment. Residues 54-63 (LGAAQMDPKV) are Periplasmic-facing. The helical transmembrane segment at 64 to 82 (VFVTTCLIAGIGSIAMGIF) threads the bilayer. Topologically, residues 83 to 84 (AN) are cytoplasmic. The discontinuously helical transmembrane segment at 85–101 (LPVALAPAMGLNAFFAF) threads the bilayer. The Periplasmic portion of the chain corresponds to 102–113 (VVVGAMGISWQT). A helical transmembrane segment spans residues 114–133 (GMGAIFWGAVGLFLLTLFRI). The Cytoplasmic segment spans residues 134–145 (RYWMISNIPLSL). Residues 146-166 (RIGITSGIGLFIALMGLKNTG) traverse the membrane as a helical segment. Residues 167–182 (VIVANKDTLVMIGDLS) lie on the Periplasmic side of the membrane. Residues 183–200 (SHGVLLGILGFFIITVLS) traverse the membrane as a helical segment. At 201-204 (SRHF) the chain is on the cytoplasmic side. A helical transmembrane segment spans residues 205-223 (HAAVLVSIVVTSCCGLFFG). Residues 224–251 (DVHFSGVYSIPPDISGVIGEVDLSGALT) lie on the Periplasmic side of the membrane. Residues 252 to 280 (LELAGIIFSFMLINLFDSSGTLIGVTDKA) form a helical membrane-spanning segment. Residues 281 to 293 (GLIDGNGKFPNMN) are Cytoplasmic-facing. The helical transmembrane segment at 294–309 (KALYVDSVSSVAGAFI) threads the bilayer. Over 310–311 (GT) the chain is Periplasmic. Residues 312 to 327 (SSVTAYIESTSGVAVG) traverse the membrane as a discontinuously helical segment. Residues 328–331 (GRTG) lie on the Cytoplasmic side of the membrane. Residues 332 to 346 (LTAVVVGVMFLLVMF) form a helical membrane-spanning segment. Over 347 to 357 (FSPLVAIVPPY) the chain is Periplasmic. Residues 358–377 (ATAGALIFVGVLMTSSLARV) form a helical membrane-spanning segment. Residues 378–382 (NWDDF) are Cytoplasmic-facing. An intramembrane region (discontinuously helical) is located at residues 383-418 (TESVPAFITTVMMPFTFSITEGIALGFMSYCIMKVC). The Cytoplasmic segment spans residues 419–444 (TGRWRDLNLCVVVVAALFALKIILVD).

It belongs to the nucleobase:cation symporter-2 (NCS2) (TC 2.A.40) family. Azg-like subfamily.

It localises to the cell inner membrane. Its function is as follows. High-affinity transporter for adenine. The sequence is that of Adenine permease AdeQ (adeQ) from Escherichia coli (strain K12).